A 198-amino-acid chain; its full sequence is V-type ATP synthase subunit E (198 aa).

The protein belongs to the V-ATPase E subunit family.

Functionally, produces ATP from ADP in the presence of a proton gradient across the membrane. The polypeptide is V-type ATP synthase subunit E (Clostridium perfringens (strain SM101 / Type A)).